The primary structure comprises 410 residues: D-amino acid dehydrogenase (410 aa).

9 to 14 lines the FAD pocket; that stretch reads GGGIVG.

This sequence belongs to the DadA oxidoreductase family. FAD serves as cofactor.

Its subcellular location is the cell inner membrane. It catalyses the reaction a D-alpha-amino acid + a quinone + H2O = a 2-oxocarboxylate + a quinol + NH4(+). Its function is as follows. Catalyzes the oxidative deamination of D-amino acids. Has broad substrate specificity; is mostly active on D-proline, and to a lesser extent, on several other D-amino acids such as D-alanine, D-phenylalanine and D-serine. Mediates electron transport from D-proline to coenzyme Q1 in vitro, and is involved in the electron transport chain from D-proline to the c-type cytochrome in vivo. This Helicobacter pylori (strain J99 / ATCC 700824) (Campylobacter pylori J99) protein is D-amino acid dehydrogenase.